Reading from the N-terminus, the 451-residue chain is Bacteriochlorophyllide d C-8(2)-methyltransferase (451 aa).

A B12-binding domain is found at 1–118 (MDDDSNQKPL…DDVANNRLKE (118 aa)). Residues 148–377 (VDGTKSIPIY…ALHLVIKSDR (230 aa)) form the Radical SAM core domain. The [4Fe-4S] cluster site is built by Cys162, Cys166, and Cys169.

Belongs to the radical SAM superfamily. Requires [4Fe-4S] cluster as cofactor.

It is found in the cytoplasm. The enzyme catalyses 8,12-diethyl-3-vinylbacteriochlorophyllide d + S-adenosyl-L-methionine = 12-ethyl-8-propyl-3-vinylbacteriochlorophyllide d + S-adenosyl-L-homocysteine + H(+). It carries out the reaction 12-ethyl-8-propyl-3-vinylbacteriochlorophyllide d + S-adenosyl-L-methionine = 12-ethyl-8-isobutyl-3-vinylbacteriochlorophyllide d + S-adenosyl-L-homocysteine + H(+). The protein operates within porphyrin-containing compound metabolism; bacteriochlorophyll biosynthesis (light-independent). In terms of biological role, involved in the biosynthesis of the major light-harvesting pigment bacteriochlorophyll c (BChlc), which confers a significant competitive advantage to green sulfur bacteria living at limiting red and near-infrared light intensities. BchQ is a methyltransferase that adds two consecutive methyl groups to the ethyl carbon at the C-8(2) position of 8,12-diethyl-3-vinylbacteriochlorophyllide d to yield 12-ethyl-8-isobutyl-3-vinylbacteriochlorophyllide d. The sequence is that of Bacteriochlorophyllide d C-8(2)-methyltransferase from Chlorobaculum tepidum (strain ATCC 49652 / DSM 12025 / NBRC 103806 / TLS) (Chlorobium tepidum).